Reading from the N-terminus, the 90-residue chain is Protein LIM3 (90 aa).

The signal sequence occupies residues 1-26 (MAAVKFLVCSVLLVVLATQSEIGLAQ). 4 disulfides stabilise this stretch: Cys-28–Cys-65, Cys-38–Cys-54, Cys-55–Cys-80, and Cys-67–Cys-87.

This sequence belongs to the A9/FIL1 family.

It is found in the secreted. The chain is Protein LIM3 (LIM3) from Lilium longiflorum (Trumpet lily).